A 231-amino-acid chain; its full sequence is Urease subunit gamma/beta (231 aa).

A urease gamma region spans residues 1–101 (MLLTPTELER…LVTVHQPIRP (101 aa)). The urease beta stretch occupies residues 102–231 (GKLPLAVMPT…RARAQHFKGA (130 aa)).

In the N-terminal section; belongs to the urease gamma subunit family. This sequence in the C-terminal section; belongs to the urease beta subunit family. As to quaternary structure, heterohexamer of 3 UreC (alpha) and 3 UreAB (gamma/beta) subunits.

It localises to the cytoplasm. It carries out the reaction urea + 2 H2O + H(+) = hydrogencarbonate + 2 NH4(+). It functions in the pathway nitrogen metabolism; urea degradation; CO(2) and NH(3) from urea (urease route): step 1/1. This chain is Urease subunit gamma/beta, found in Pseudomonas syringae pv. tomato (strain ATCC BAA-871 / DC3000).